The chain runs to 179 residues: ATP synthase subunit delta (179 aa).

Belongs to the ATPase delta chain family. As to quaternary structure, F-type ATPases have 2 components, F(1) - the catalytic core - and F(0) - the membrane proton channel. F(1) has five subunits: alpha(3), beta(3), gamma(1), delta(1), epsilon(1). F(0) has three main subunits: a(1), b(2) and c(10-14). The alpha and beta chains form an alternating ring which encloses part of the gamma chain. F(1) is attached to F(0) by a central stalk formed by the gamma and epsilon chains, while a peripheral stalk is formed by the delta and b chains.

It localises to the cell inner membrane. In terms of biological role, f(1)F(0) ATP synthase produces ATP from ADP in the presence of a proton or sodium gradient. F-type ATPases consist of two structural domains, F(1) containing the extramembraneous catalytic core and F(0) containing the membrane proton channel, linked together by a central stalk and a peripheral stalk. During catalysis, ATP synthesis in the catalytic domain of F(1) is coupled via a rotary mechanism of the central stalk subunits to proton translocation. This protein is part of the stalk that links CF(0) to CF(1). It either transmits conformational changes from CF(0) to CF(1) or is implicated in proton conduction. The chain is ATP synthase subunit delta from Cupriavidus pinatubonensis (strain JMP 134 / LMG 1197) (Cupriavidus necator (strain JMP 134)).